The following is a 286-amino-acid chain: D-tagatose-1,6-bisphosphate aldolase subunit KbaY (286 aa).

The active-site Proton donor is D82. Zn(2+)-binding residues include H83 and H180. Residue G181 coordinates dihydroxyacetone phosphate. Residue H208 coordinates Zn(2+). Dihydroxyacetone phosphate is bound by residues 209–211 (GAS) and 230–233 (NVAT).

The protein belongs to the class II fructose-bisphosphate aldolase family. TagBP aldolase KbaY subfamily. Homotetramer. Forms a complex with KbaZ. It depends on Zn(2+) as a cofactor.

The enzyme catalyses D-tagatofuranose 1,6-bisphosphate = D-glyceraldehyde 3-phosphate + dihydroxyacetone phosphate. Its pathway is carbohydrate metabolism; D-tagatose 6-phosphate degradation; D-glyceraldehyde 3-phosphate and glycerone phosphate from D-tagatose 6-phosphate: step 2/2. Catalytic subunit of the tagatose-1,6-bisphosphate aldolase KbaYZ, which catalyzes the reversible aldol condensation of dihydroxyacetone phosphate (DHAP or glycerone-phosphate) with glyceraldehyde 3-phosphate (G3P) to produce tagatose 1,6-bisphosphate (TBP). Requires KbaZ subunit for full activity and stability. In Escherichia coli O7:K1 (strain IAI39 / ExPEC), this protein is D-tagatose-1,6-bisphosphate aldolase subunit KbaY.